A 301-amino-acid polypeptide reads, in one-letter code: Enolase-phosphatase E1 (301 aa).

Residues aspartate 22 and glutamate 24 each contribute to the Mg(2+) site. Residues 163–164 and lysine 197 contribute to the substrate site; that span reads SS. Aspartate 222 contributes to the Mg(2+) binding site. The segment at 273–301 is disordered; it reads AQAGDTEAKRSASGDGALAAKKAPPTHDF.

The protein belongs to the HAD-like hydrolase superfamily. MasA/MtnC family. Monomer. Mg(2+) is required as a cofactor.

Its subcellular location is the cytoplasm. The protein resides in the nucleus. The enzyme catalyses 5-methylsulfanyl-2,3-dioxopentyl phosphate + H2O = 1,2-dihydroxy-5-(methylsulfanyl)pent-1-en-3-one + phosphate. It functions in the pathway amino-acid biosynthesis; L-methionine biosynthesis via salvage pathway; L-methionine from S-methyl-5-thio-alpha-D-ribose 1-phosphate: step 3/6. The protein operates within amino-acid biosynthesis; L-methionine biosynthesis via salvage pathway; L-methionine from S-methyl-5-thio-alpha-D-ribose 1-phosphate: step 4/6. Its function is as follows. Bifunctional enzyme that catalyzes the enolization of 2,3-diketo-5-methylthiopentyl-1-phosphate (DK-MTP-1-P) into the intermediate 2-hydroxy-3-keto-5-methylthiopentenyl-1-phosphate (HK-MTPenyl-1-P), which is then dephosphorylated to form the acireductone 1,2-dihydroxy-3-keto-5-methylthiopentene (DHK-MTPene). This chain is Enolase-phosphatase E1, found in Monosiga brevicollis (Choanoflagellate).